A 165-amino-acid polypeptide reads, in one-letter code: Protein-export protein SecB (165 aa).

It belongs to the SecB family. In terms of assembly, homotetramer, a dimer of dimers. One homotetramer interacts with 1 SecA dimer.

Its subcellular location is the cytoplasm. In terms of biological role, one of the proteins required for the normal export of preproteins out of the cell cytoplasm. It is a molecular chaperone that binds to a subset of precursor proteins, maintaining them in a translocation-competent state. It also specifically binds to its receptor SecA. This Ruegeria pomeroyi (strain ATCC 700808 / DSM 15171 / DSS-3) (Silicibacter pomeroyi) protein is Protein-export protein SecB.